Reading from the N-terminus, the 590-residue chain is Ankyrin repeat domain-containing protein 13A (590 aa).

ANK repeat units follow at residues 40–69 and 73–102; these read RGRTLLHLAVSLGHLESARVLLRHKADVTK and QGWTVLHEAVSTGDPEMVYTVLQHRDYHNT. At S205 the chain carries Phosphoserine. UIM domains lie at 483 to 502, 519 to 538, 549 to 568, and 574 to 590; these read EDYEIMQFAIQQSLLESSRS, TYDAQYERAIQESLLTSTEG, RFDNDLQLAMELSAKELEEW, and EEEAELQQVLQLSLTDK. The residue at position 586 (S586) is a Phosphoserine.

Interacts (via the UIM 3 and 4 repeats) with EGFR (ubiquitinated); the interaction is direct, inhibited by ANKRD13A monoubiquitination and may regulate EGFR internalization. Post-translationally, monoubiquitinated, inhibits interaction with ubiquitinated EGFR.

It is found in the cell membrane. The protein localises to the late endosome. In terms of biological role, ubiquitin-binding protein that specifically recognizes and binds 'Lys-63'-linked ubiquitin. Does not bind 'Lys-48'-linked ubiquitin. Positively regulates the internalization of ligand-activated EGFR by binding to the Ub moiety of ubiquitinated EGFR at the cell membrane. This is Ankyrin repeat domain-containing protein 13A (ANKRD13A) from Homo sapiens (Human).